The following is a 131-amino-acid chain: Cell cycle protein GpsB (131 aa).

Residues 39-76 (LDGIIRDYEAFTNEIDRLKEENTKLFSRVDELTKQLSV) are a coiled coil. Residues 111-131 (KLSDSSVDNHDDGNHSDVDQY) are disordered. The segment covering 117–131 (VDNHDDGNHSDVDQY) has biased composition (basic and acidic residues).

It belongs to the GpsB family. In terms of assembly, forms polymers through the coiled coil domains. Interacts with PBP1, MreC and EzrA.

It localises to the cytoplasm. Its function is as follows. Divisome component that associates with the complex late in its assembly, after the Z-ring is formed, and is dependent on DivIC and PBP2B for its recruitment to the divisome. Together with EzrA, is a key component of the system that regulates PBP1 localization during cell cycle progression. Its main role could be the removal of PBP1 from the cell pole after pole maturation is completed. Also contributes to the recruitment of PBP1 to the division complex. Not essential for septum formation. In Lacticaseibacillus casei (strain BL23) (Lactobacillus casei), this protein is Cell cycle protein GpsB.